A 157-amino-acid polypeptide reads, in one-letter code: 2-C-methyl-D-erythritol 2,4-cyclodiphosphate synthase (157 aa).

A divalent metal cation-binding residues include aspartate 8 and histidine 10. Residues 8-10 and 34-35 contribute to the 4-CDP-2-C-methyl-D-erythritol 2-phosphate site; these read DVH and HS. A divalent metal cation is bound at residue histidine 42. 4-CDP-2-C-methyl-D-erythritol 2-phosphate-binding positions include 56–58, 61–65, 100–106, 132–135, phenylalanine 139, and arginine 142; these read DIG, FPDTD, AQAPKMA, and TTTE.

It belongs to the IspF family. Homotrimer. It depends on a divalent metal cation as a cofactor.

The enzyme catalyses 4-CDP-2-C-methyl-D-erythritol 2-phosphate = 2-C-methyl-D-erythritol 2,4-cyclic diphosphate + CMP. Its pathway is isoprenoid biosynthesis; isopentenyl diphosphate biosynthesis via DXP pathway; isopentenyl diphosphate from 1-deoxy-D-xylulose 5-phosphate: step 4/6. Its function is as follows. Involved in the biosynthesis of isopentenyl diphosphate (IPP) and dimethylallyl diphosphate (DMAPP), two major building blocks of isoprenoid compounds. Catalyzes the conversion of 4-diphosphocytidyl-2-C-methyl-D-erythritol 2-phosphate (CDP-ME2P) to 2-C-methyl-D-erythritol 2,4-cyclodiphosphate (ME-CPP) with a corresponding release of cytidine 5-monophosphate (CMP). The sequence is that of 2-C-methyl-D-erythritol 2,4-cyclodiphosphate synthase from Pseudomonas paraeruginosa (strain DSM 24068 / PA7) (Pseudomonas aeruginosa (strain PA7)).